The primary structure comprises 156 residues: B3 domain-containing protein At5g26805 (156 aa).

A DNA-binding region (TF-B3) is located at residues 57-155 (KFQLPMEKIR…MFCFSVLDGR (99 aa)).

The protein resides in the nucleus. This chain is B3 domain-containing protein At5g26805, found in Arabidopsis thaliana (Mouse-ear cress).